Reading from the N-terminus, the 350-residue chain is B1 bradykinin receptor (350 aa).

The Extracellular portion of the chain corresponds to 1–41 (MASRAPLELLPLNRSQLSPPNATTCDDAPEAWDLLHRVLPS). 2 N-linked (GlcNAc...) asparagine glycosylation sites follow: Asn13 and Asn21. Residues 42–62 (VIIIICVCGLLGNLLVLAVLL) traverse the membrane as a helical segment. Topologically, residues 63-72 (RPRRRLNVAE) are cytoplasmic. A helical membrane pass occupies residues 73–93 (MYLANLAASDLVFVLGLPFWA). At 94–110 (ANISNQFRWPFGGLLCR) the chain is on the extracellular side. Asn95 carries N-linked (GlcNAc...) asparagine glycosylation. An intrachain disulfide couples Cys109 to Cys186. A helical membrane pass occupies residues 111-131 (LVNGVIKANLFISIFLVVAIS). At 132–150 (RDRYRALVHPMATRRRRQA) the chain is on the cytoplasmic side. The chain crosses the membrane as a helical span at residues 151–171 (RATCVLIWVAGSLLSVPTFLF). Residues 172-204 (RSIEAVPELNNDSACVLLHPPGAWHVARMVELN) are Extracellular-facing. Residue Asn182 is glycosylated (N-linked (GlcNAc...) asparagine). A helical membrane pass occupies residues 205-225 (VLGFLLPLAAIVFFNCHILAS). At 226–248 (LRGRPEVRGARCGGPPDGRTTAL) the chain is on the cytoplasmic side. A helical membrane pass occupies residues 249 to 269 (ILTFVAAFLVCWTPYHFFAFL). Topologically, residues 270–292 (EFLTQVQVVRGCFWENFKDLGLQ) are extracellular. Residues 293–313 (YASFFAFINSCLNPVIYVFVG) traverse the membrane as a helical segment. The Cytoplasmic segment spans residues 314–350 (RLFRTRVWDLFKQCAPRRPPAVSWSHRKRVLQLFWQN). The S-palmitoyl cysteine moiety is linked to residue Cys327.

It belongs to the G-protein coupled receptor 1 family. Bradykinin receptor subfamily. BDKRB1 sub-subfamily.

Its subcellular location is the cell membrane. Functionally, this is a receptor for bradykinin. Could be a factor in chronic pain and inflammation. This chain is B1 bradykinin receptor (BDKRB1), found in Canis lupus familiaris (Dog).